Reading from the N-terminus, the 256-residue chain is Protein FixA (256 aa).

It belongs to the ETF beta-subunit/FixA family. In terms of assembly, heterodimer of FixA and FixB.

Its pathway is amine and polyamine metabolism; carnitine metabolism. Required for anaerobic carnitine reduction. May bring reductant to CaiA. The sequence is that of Protein FixA from Escherichia fergusonii (strain ATCC 35469 / DSM 13698 / CCUG 18766 / IAM 14443 / JCM 21226 / LMG 7866 / NBRC 102419 / NCTC 12128 / CDC 0568-73).